The sequence spans 488 residues: Malonate-semialdehyde dehydrogenase 2 (488 aa).

Residues phenylalanine 155, lysine 179, glutamate 182, arginine 183, and serine 232 each contribute to the NAD(+) site. Cysteine 287 acts as the Nucleophile in catalysis. Residue glutamate 387 coordinates NAD(+).

It belongs to the aldehyde dehydrogenase family. IolA subfamily. Homotetramer.

The catalysed reaction is 3-oxopropanoate + NAD(+) + CoA + H2O = hydrogencarbonate + acetyl-CoA + NADH + H(+). It catalyses the reaction 2-methyl-3-oxopropanoate + NAD(+) + CoA + H2O = propanoyl-CoA + hydrogencarbonate + NADH + H(+). It functions in the pathway polyol metabolism; myo-inositol degradation into acetyl-CoA; acetyl-CoA from myo-inositol: step 7/7. Catalyzes the oxidation of malonate semialdehyde (MSA) and methylmalonate semialdehyde (MMSA) into acetyl-CoA and propanoyl-CoA, respectively. Is involved in a myo-inositol catabolic pathway. Bicarbonate, and not CO2, is the end-product of the enzymatic reaction. This chain is Malonate-semialdehyde dehydrogenase 2, found in Bacillus cereus (strain ZK / E33L).